Reading from the N-terminus, the 466-residue chain is Sushi repeat-containing protein SRPX2 (466 aa).

A signal peptide spans 1 to 24; it reads MKTGSLTQRGALLLLLLLAPAVTP. Sushi domains follow at residues 70-120, 121-179, and 263-322; these read ATCY…YCRQ, MRCH…VCVD, and RRCP…VCTP. Intrachain disulfides connect C72–C106, C92–C118, C123–C164, and C150–C177. In terms of domain architecture, HYR spans 178 to 262; it reads VDIDPPKIRC…SCKFIVKVQV (85 aa). Cystine bridges form between C265–C307 and C293–C320.

As to quaternary structure, forms homooligomers. Interacts with PLAUR (via the UPAR/Ly6 domains), ADAMTS4 and CTSB. Interacts with HGF; the interaction increases the mitogenic activity of HGF. In terms of processing, contains chondroitin sulfate chains.

It is found in the secreted. The protein localises to the cytoplasm. It localises to the cell surface. Its subcellular location is the synapse. Its function is as follows. Acts as a ligand for the urokinase plasminogen activator surface receptor. Plays a role in angiogenesis by inducing endothelial cell migration and the formation of vascular network (cords). Involved in cellular migration and adhesion. Increases the phosphorylation levels of FAK. Interacts with and increases the mitogenic activity of HGF. Promotes synapse formation. This chain is Sushi repeat-containing protein SRPX2, found in Rattus norvegicus (Rat).